Reading from the N-terminus, the 210-residue chain is Imidazole glycerol phosphate synthase subunit HisH (210 aa).

One can recognise a Glutamine amidotransferase type-1 domain in the interval 3–208 (PIAIIDYGMG…GELVRHAGNA (206 aa)). Residue Cys-81 is the Nucleophile of the active site. Active-site residues include His-183 and Glu-185.

Heterodimer of HisH and HisF.

It is found in the cytoplasm. It catalyses the reaction 5-[(5-phospho-1-deoxy-D-ribulos-1-ylimino)methylamino]-1-(5-phospho-beta-D-ribosyl)imidazole-4-carboxamide + L-glutamine = D-erythro-1-(imidazol-4-yl)glycerol 3-phosphate + 5-amino-1-(5-phospho-beta-D-ribosyl)imidazole-4-carboxamide + L-glutamate + H(+). It carries out the reaction L-glutamine + H2O = L-glutamate + NH4(+). The protein operates within amino-acid biosynthesis; L-histidine biosynthesis; L-histidine from 5-phospho-alpha-D-ribose 1-diphosphate: step 5/9. Functionally, IGPS catalyzes the conversion of PRFAR and glutamine to IGP, AICAR and glutamate. The HisH subunit catalyzes the hydrolysis of glutamine to glutamate and ammonia as part of the synthesis of IGP and AICAR. The resulting ammonia molecule is channeled to the active site of HisF. This is Imidazole glycerol phosphate synthase subunit HisH from Moorella thermoacetica (strain ATCC 39073 / JCM 9320).